Reading from the N-terminus, the 597-residue chain is Nucleolar protein 58 (597 aa).

The Nop domain maps to 285 to 410 (IAPNMTELVG…LENNLRQLEG (126 aa)). A disordered region spans residues 452 to 597 (AEAPKKPLIQ…KKKKKKSSKE (146 aa)). Residues 482-499 (KSKKDKKEKKEKKDKKAK) are compositionally biased toward basic residues. Basic and acidic residues predominate over residues 532–551 (IKEDGTLEILSKKDFKGKDA). The segment covering 552–561 (EAEEEAEEEE) has biased composition (acidic residues). The segment covering 588–597 (KKKKKKSSKE) has biased composition (basic residues).

Belongs to the NOP5/NOP56 family.

The protein localises to the nucleus. The protein resides in the nucleolus. Required for pre-18S rRNA processing. May bind microtubules. The chain is Nucleolar protein 58 (nop-58) from Neurospora crassa (strain ATCC 24698 / 74-OR23-1A / CBS 708.71 / DSM 1257 / FGSC 987).